The following is a 343-amino-acid chain: Anthranilate phosphoribosyltransferase (343 aa).

5-phospho-alpha-D-ribose 1-diphosphate contacts are provided by residues glycine 78, 81–82, threonine 86, 88–91, 106–114, and serine 118; these read GD, NIST, and KHGNRSVSS. An anthranilate-binding site is contributed by glycine 78. A Mg(2+)-binding site is contributed by serine 90. Asparagine 109 contributes to the anthranilate binding site. Arginine 164 is an anthranilate binding site. The Mg(2+) site is built by aspartate 223 and glutamate 224.

Belongs to the anthranilate phosphoribosyltransferase family. In terms of assembly, homodimer. The cofactor is Mg(2+).

It catalyses the reaction N-(5-phospho-beta-D-ribosyl)anthranilate + diphosphate = 5-phospho-alpha-D-ribose 1-diphosphate + anthranilate. Its pathway is amino-acid biosynthesis; L-tryptophan biosynthesis; L-tryptophan from chorismate: step 2/5. Its function is as follows. Catalyzes the transfer of the phosphoribosyl group of 5-phosphorylribose-1-pyrophosphate (PRPP) to anthranilate to yield N-(5'-phosphoribosyl)-anthranilate (PRA). This is Anthranilate phosphoribosyltransferase from Chlamydia caviae (strain ATCC VR-813 / DSM 19441 / 03DC25 / GPIC) (Chlamydophila caviae).